We begin with the raw amino-acid sequence, 111 residues long: Nucleoid-associated protein Cpha266_1171 (111 aa).

It belongs to the YbaB/EbfC family. Homodimer.

It localises to the cytoplasm. Its subcellular location is the nucleoid. Its function is as follows. Binds to DNA and alters its conformation. May be involved in regulation of gene expression, nucleoid organization and DNA protection. In Chlorobium phaeobacteroides (strain DSM 266 / SMG 266 / 2430), this protein is Nucleoid-associated protein Cpha266_1171.